The chain runs to 170 residues: Cilia- and flagella-associated protein 276 (170 aa).

Disordered stretches follow at residues 1–37 (MPLT…PTHL) and 151–170 (HTAA…FFST).

In terms of assembly, microtubule inner protein component of sperm flagellar doublet microtubules. In terms of tissue distribution, expressed in trachea multiciliated cells.

The protein resides in the cytoplasm. Its subcellular location is the cytoskeleton. It is found in the cilium axoneme. It localises to the flagellum axoneme. Microtubule inner protein (MIP) part of the dynein-decorated doublet microtubules (DMTs) in cilia axoneme, which is required for motile cilia beating. May play an important role for the maintenance of myelin-axon integrity. May affect intracellular Ca(2+) homeostasis. In Bos taurus (Bovine), this protein is Cilia- and flagella-associated protein 276.